Reading from the N-terminus, the 83-residue chain is U25-theraphotoxin-Cg1a (83 aa).

A signal peptide spans 1–23; the sequence is MRFHTLLFLSFLLLVSCALICTA. A propeptide spanning residues 24–48 is cleaved from the precursor; it reads QHPGLEKSGMFHENVGKGQHIEEKR. Cystine bridges form between C50–C66, C57–C71, and C65–C81.

Belongs to the neurotoxin 07 (Beta/delta-agtx) family. 03 (aga-4) subfamily. JZTX sub-subfamily. In terms of tissue distribution, expressed by the venom gland.

Its subcellular location is the secreted. In terms of biological role, inhibits TTX-sensitive sodium currents in rat dorsal root ganglion (DRG) neurons. In Chilobrachys guangxiensis (Chinese earth tiger tarantula), this protein is U25-theraphotoxin-Cg1a.